The following is a 180-amino-acid chain: dCTP deaminase, dUMP-forming (180 aa).

DCTP is bound by residues 100–105 (RSSLGR), Asp-117, 125–127 (TLE), Gln-146, Tyr-160, and Gln-167. Glu-127 acts as the Proton donor/acceptor in catalysis.

It belongs to the dCTP deaminase family. Homotrimer.

It catalyses the reaction dCTP + 2 H2O = dUMP + NH4(+) + diphosphate. It participates in pyrimidine metabolism; dUMP biosynthesis; dUMP from dCTP: step 1/1. Functionally, bifunctional enzyme that catalyzes both the deamination of dCTP to dUTP and the hydrolysis of dUTP to dUMP without releasing the toxic dUTP intermediate. The sequence is that of dCTP deaminase, dUMP-forming from Sulfurihydrogenibium sp. (strain YO3AOP1).